Consider the following 565-residue polypeptide: Sulfite reductase [NADPH] hemoprotein beta-component (565 aa).

Residues cysteine 429, cysteine 435, cysteine 474, and cysteine 478 each contribute to the [4Fe-4S] cluster site. A siroheme-binding site is contributed by cysteine 478.

It belongs to the nitrite and sulfite reductase 4Fe-4S domain family. As to quaternary structure, alpha(8)-beta(8). The alpha component is a flavoprotein, the beta component is a hemoprotein. Requires siroheme as cofactor. The cofactor is [4Fe-4S] cluster.

The catalysed reaction is hydrogen sulfide + 3 NADP(+) + 3 H2O = sulfite + 3 NADPH + 4 H(+). Its pathway is sulfur metabolism; hydrogen sulfide biosynthesis; hydrogen sulfide from sulfite (NADPH route): step 1/1. In terms of biological role, component of the sulfite reductase complex that catalyzes the 6-electron reduction of sulfite to sulfide. This is one of several activities required for the biosynthesis of L-cysteine from sulfate. This is Sulfite reductase [NADPH] hemoprotein beta-component from Shewanella halifaxensis (strain HAW-EB4).